The primary structure comprises 160 residues: Twist-related protein 2 (160 aa).

The tract at residues 1-63 (MEEGSSSPVS…GSPSAQSFEE (63 aa)) is disordered. Basic residues predominate over residues 27–37 (KRFGRKRRYSK). Residues 66-117 (SQRILANVRERQRTQSLNEAFAALRKIIPTLPSDKLSKIQTLKLAARYIDFL) form the bHLH domain.

Efficient DNA binding requires dimerization with another bHLH protein. Forms a heterodimer with TCF3/E12. Also interacts with MEF2C. In terms of tissue distribution, expressed at low levels in sclerotome and dermatome of somites, and in limb buds at 10.5 dpc. Accumulates predominantly in dermatome, prevertebrae and derivatives of branchial arches by 13 dpc. Also expressed near surface of embryo and in chondrogenic cells. In adult, expressed at low levels in skin, bladder, uterus, aorta and heart.

It is found in the nucleus. The protein resides in the cytoplasm. Functionally, binds to the E-box consensus sequence 5'-CANNTG-3' as a heterodimer and inhibits transcriptional activation by MYOD1, MYOG, MEF2A and MEF2C. Also represses expression of pro-inflammatory cytokines such as TNFA and IL1B. Involved in postnatal glycogen storage and energy metabolism. Inhibits the premature or ectopic differentiation of preosteoblast cells during osteogenesis, possibly by changing the internal signal transduction response of osteoblasts to external growth factors. The protein is Twist-related protein 2 (Twist2) of Mus musculus (Mouse).